Here is a 781-residue protein sequence, read N- to C-terminus: Arf-GAP with coiled-coil, ANK repeat and PH domain-containing protein 2 (781 aa).

The BAR domain occupies 1-226; it reads MKVTVDFEEC…MKDLGAQLDQ (226 aa). Positions 266–361 constitute a PH domain; sequence GIVMEGYLFK…WIKAVQTSIA (96 aa). Positions 365-378 are enriched in basic and acidic residues; it reads REKGDESEKQEKKS. The interval 365 to 390 is disordered; it reads REKGDESEKQEKKSSPSTGSLESGSE. Low complexity predominate over residues 379 to 388; it reads SPSTGSLESG. Residues 399-521 form the Arf-GAP domain; it reads ESALQRVQCI…KFVEKQPAAA (123 aa). The C4-type zinc-finger motif lies at 414–437; the sequence is CCDCGLADPRWASINLGITLCIEC. The disordered stretch occupies residues 520–576; that stretch reads AAVSPLESRTKVLPQSQEEKRHSAPEKSFLAIEQGAASPRVRSSDSGIQQSVDDSRE. ANK repeat units lie at residues 642–671, 675–704, and 708–737; these read NKAT…NVNI, KGRG…NQHA, and DGKD…NEEM.

It localises to the endosome membrane. Its subcellular location is the cell membrane. Its activity is regulated as follows. GAP activity stimulated by phosphatidylinositol 4,5-bisphosphate (PIP2) and phosphatidic acid. Functionally, GTPase-activating protein (GAP) for ADP ribosylation factor 6 (ARF6). The polypeptide is Arf-GAP with coiled-coil, ANK repeat and PH domain-containing protein 2 (ACAP2) (Gallus gallus (Chicken)).